The chain runs to 413 residues: BEN domain-containing protein 7 (413 aa).

Glycyl lysine isopeptide (Lys-Gly) (interchain with G-Cter in SUMO2) cross-links involve residues lysine 16, lysine 56, and lysine 85. The span at 78–88 shows a compositional bias: basic and acidic residues; sequence GKEGEKLKEEP. Disordered regions lie at residues 78–153 and 208–243; these read GKEG…GELP and RTAVSRKRNKKKKVPPKTVEPLTVKQKPSGSEMEKK. Composition is skewed to polar residues over residues 99 to 111 and 121 to 153; these read LNSSAEAPQSLHP and PPQSGQFSGQYGTRSRTFQSQPHPTTSSNGELP. A compositionally biased stretch (basic residues) spans 211-222; the sequence is VSRKRNKKKKVP. Residues 223–232 are compositionally biased toward low complexity; that stretch reads PKTVEPLTVK. Residue lysine 243 forms a Glycyl lysine isopeptide (Lys-Gly) (interchain with G-Cter in SUMO2) linkage. The BEN domain maps to 287-392; that stretch reads GFDVFMPKSQ…IKLARRRLKR (106 aa). Threonine 324 is subject to Phosphothreonine. Phosphoserine is present on serine 328.

This chain is BEN domain-containing protein 7 (BEND7), found in Homo sapiens (Human).